The primary structure comprises 1555 residues: Probable serine/threonine-protein kinase DDB_G0276181 (1555 aa).

5 disordered regions span residues 1-54 (MTSV…NNSF), 138-208 (IIQQ…NSKL), 342-452 (KLKK…DSPF), 486-508 (TTTT…IKPL), and 781-850 (NNIN…NQNT). Composition is skewed to low complexity over residues 14-53 (NNSG…NNNS), 138-205 (IIQQ…NNNN), 359-378 (SNIA…KING), and 395-431 (NNSQ…SKKP). One can recognise a PH domain in the interval 58 to 238 (QVLHTGYLTK…WIEMIKLAIS (181 aa)). A compositionally biased stretch (polar residues) spans 437-452 (RNISTSDNGSGTDSPF). Composition is skewed to low complexity over residues 486–504 (TTTT…TNTN) and 781–832 (NNIN…NNNN). A compositionally biased stretch (polar residues) spans 833–850 (GSGLLSSSPLITISNQNT). The Protein kinase domain maps to 986 to 1309 (VVLHERLGTG…TIIHSISKMI (324 aa)). ATP is bound at residue 992–1000 (LGTGATGDI). Residues 1012–1031 (RHISNQDSSGSNSSGSGSGH) are disordered. Lys-1061 lines the ATP pocket. Asp-1156 (proton acceptor) is an active-site residue. Low complexity predominate over residues 1340 to 1376 (VQNNNNNSNNNNNNNNNNNNNNSNSNLNNCNNSSPNL). 2 disordered regions span residues 1340–1383 (VQNN…SANN) and 1457–1480 (KKSS…GSSR).

Belongs to the protein kinase superfamily. TKL Ser/Thr protein kinase family.

It catalyses the reaction L-seryl-[protein] + ATP = O-phospho-L-seryl-[protein] + ADP + H(+). The enzyme catalyses L-threonyl-[protein] + ATP = O-phospho-L-threonyl-[protein] + ADP + H(+). The sequence is that of Probable serine/threonine-protein kinase DDB_G0276181 from Dictyostelium discoideum (Social amoeba).